The primary structure comprises 377 residues: Cobalt-precorrin-5B C(1)-methyltransferase (377 aa).

The interval 1 to 21 (MNPVRQPYDLAAPAPNGMRRG) is disordered.

It belongs to the CbiD family.

It carries out the reaction Co-precorrin-5B + S-adenosyl-L-methionine = Co-precorrin-6A + S-adenosyl-L-homocysteine. It participates in cofactor biosynthesis; adenosylcobalamin biosynthesis; cob(II)yrinate a,c-diamide from sirohydrochlorin (anaerobic route): step 6/10. Functionally, catalyzes the methylation of C-1 in cobalt-precorrin-5B to form cobalt-precorrin-6A. The polypeptide is Cobalt-precorrin-5B C(1)-methyltransferase (Chromobacterium violaceum (strain ATCC 12472 / DSM 30191 / JCM 1249 / CCUG 213 / NBRC 12614 / NCIMB 9131 / NCTC 9757 / MK)).